Here is a 199-residue protein sequence, read N- to C-terminus: Prolactin (199 aa).

A disulfide bond links cysteine 4 and cysteine 11. 3 positions are modified to phosphoserine: serine 26, serine 34, and serine 90. 2 cysteine pairs are disulfide-bonded: cysteine 58–cysteine 174 and cysteine 191–cysteine 199.

This sequence belongs to the somatotropin/prolactin family. As to quaternary structure, interacts with PRLR.

It localises to the secreted. Its function is as follows. Prolactin acts primarily on the mammary gland by promoting lactation. This is Prolactin (PRL) from Loxodonta africana (African elephant).